A 508-amino-acid chain; its full sequence is MAP kinase kinase MKK1/SSP32 (508 aa).

Disordered stretches follow at residues 1 to 21 (MASLFRPPESAKCNPNSPRLK), 35 to 95 (IYLT…LSIN), and 130 to 158 (ELSGNSDLTPSSMASPFSHTNTSSPYLRN). Residues 35–47 (IYLTSNGSSTTAY) are compositionally biased toward polar residues. Over residues 48–66 (SSHTPEPLTSSTSTLFSQT) the composition is skewed to low complexity. Polar residues-rich tracts occupy residues 67–79 (RLHPSDSSMTLNT) and 131–158 (LSGNSDLTPSSMASPFSHTNTSSPYLRN). The residue at position 192 (serine 192) is a Phosphoserine. In terms of domain architecture, Protein kinase spans 221–488 (IETLGILGEG…PRQMINHPWI (268 aa)). Residues 227–235 (LGEGAGGSV) and lysine 250 contribute to the ATP site. Aspartate 349 acts as the Proton acceptor in catalysis.

It belongs to the protein kinase superfamily. STE Ser/Thr protein kinase family. MAP kinase kinase subfamily.

The catalysed reaction is L-seryl-[protein] + ATP = O-phospho-L-seryl-[protein] + ADP + H(+). The enzyme catalyses L-threonyl-[protein] + ATP = O-phospho-L-threonyl-[protein] + ADP + H(+). It catalyses the reaction L-tyrosyl-[protein] + ATP = O-phospho-L-tyrosyl-[protein] + ADP + H(+). Involved in a signal transduction pathway that play a role in yeast cell morphogenesis and cell growth. This pathway seems to start by SMP3; then involve the kinase PKC1 that may act on the BCK1 kinase that then phosphorylates MKK1 and MKK2 which themselves phosphorylate the MPK1 kinase. The protein is MAP kinase kinase MKK1/SSP32 (MKK1) of Saccharomyces cerevisiae (strain ATCC 204508 / S288c) (Baker's yeast).